A 391-amino-acid chain; its full sequence is Phosphoglycerate kinase (391 aa).

Residues 21–23 (DLN), R36, 59–62 (HLGR), R113, and R146 each bind substrate. Residues K197, E319, and 345–348 (GGDT) contribute to the ATP site.

It belongs to the phosphoglycerate kinase family. In terms of assembly, monomer.

It is found in the cytoplasm. It carries out the reaction (2R)-3-phosphoglycerate + ATP = (2R)-3-phospho-glyceroyl phosphate + ADP. Its pathway is carbohydrate degradation; glycolysis; pyruvate from D-glyceraldehyde 3-phosphate: step 2/5. This is Phosphoglycerate kinase from Pseudoalteromonas translucida (strain TAC 125).